We begin with the raw amino-acid sequence, 210 residues long: Outer surface protein C (210 aa).

Positions 1–18 (MKKNTLSAILMTLFLFIS) are cleaved as a signal peptide. A lipid anchor (N-palmitoyl cysteine) is attached at Cys19. Cys19 carries the S-diacylglycerol cysteine lipid modification.

The protein belongs to the OspC lipoprotein family. As to quaternary structure, homodimer. Binds human plasminogen on the bacterial surface, also binds human plasmin. Interacts with tick I.ricinus salivary protein Iric-1. Interacts with human complement C4 beta chain (C4B); whole bacteria bind to wells coated with C4b. Binding is inhibited by human complement factor C2.

It localises to the cell outer membrane. It is found in the cell surface. Functionally, a major immunodominant protein in mammalian hosts. Required for the initial stages of mammalian infection. Interaction with tick I.ricinus salivary protein Salp15 protects the bacteria from antibody-mediated killing in vitro and in vivo. Inhibits macrophage-mediated phagocytosis of the bacteria. Binds human plasminogen; this probably confers an extracellular protease activity on the bacteria that allows it to traverse tissue. Binds human complement C4-B, which may inhibit the complement cascade. Experiments in mice suggest it may play another role after initial infection. In Borreliella burgdorferi (strain ATCC 35210 / DSM 4680 / CIP 102532 / B31) (Borrelia burgdorferi), this protein is Outer surface protein C.